Consider the following 313-residue polypeptide: Dihydroorotate dehydrogenase B (NAD(+)), catalytic subunit (313 aa).

FMN-binding positions include serine 21 and 45 to 46 (KA). Residues lysine 45 and 69–73 (NAIGL) contribute to the substrate site. Residues asparagine 99 and asparagine 127 each contribute to the FMN site. Asparagine 127 lines the substrate pocket. The active-site Nucleophile is cysteine 130. FMN is bound by residues lysine 165 and isoleucine 191. Position 192–193 (192–193 (NT)) interacts with substrate. FMN contacts are provided by residues glycine 217, 243-244 (GG), and 265-266 (GT).

The protein belongs to the dihydroorotate dehydrogenase family. Type 1 subfamily. In terms of assembly, heterotetramer of 2 PyrK and 2 PyrD type B subunits. FMN is required as a cofactor.

The protein localises to the cytoplasm. The enzyme catalyses (S)-dihydroorotate + NAD(+) = orotate + NADH + H(+). It participates in pyrimidine metabolism; UMP biosynthesis via de novo pathway; orotate from (S)-dihydroorotate (NAD(+) route): step 1/1. Its function is as follows. Catalyzes the conversion of dihydroorotate to orotate with NAD(+) as electron acceptor. This is Dihydroorotate dehydrogenase B (NAD(+)), catalytic subunit (pyrD) from Geobacillus sp. (strain WCH70).